The primary structure comprises 76 residues: Large ribosomal subunit protein bL31 (76 aa).

The protein belongs to the bacterial ribosomal protein bL31 family. Type A subfamily. In terms of assembly, part of the 50S ribosomal subunit.

Functionally, binds the 23S rRNA. The sequence is that of Large ribosomal subunit protein bL31 from Picosynechococcus sp. (strain ATCC 27264 / PCC 7002 / PR-6) (Agmenellum quadruplicatum).